The primary structure comprises 455 residues: Glutamate--tRNA ligase (455 aa).

The 'HIGH' region signature appears at 8-18; the sequence is PSPTGYLHIGG. Positions 231–235 match the 'KMSKS' region motif; it reads RLSKR. Position 234 (Lys-234) interacts with ATP.

Belongs to the class-I aminoacyl-tRNA synthetase family. Glutamate--tRNA ligase type 1 subfamily. Monomer.

The protein localises to the cytoplasm. It carries out the reaction tRNA(Glu) + L-glutamate + ATP = L-glutamyl-tRNA(Glu) + AMP + diphosphate. Its function is as follows. Catalyzes the attachment of glutamate to tRNA(Glu) in a two-step reaction: glutamate is first activated by ATP to form Glu-AMP and then transferred to the acceptor end of tRNA(Glu). This is Glutamate--tRNA ligase from Vesicomyosocius okutanii subsp. Calyptogena okutanii (strain HA).